An 818-amino-acid chain; its full sequence is LisH domain-containing protein ARMC9 (818 aa).

The region spanning 7–39 (HESELLGLVKEYLDFAEFEDTLKTFSKECKIKG) is the LisH domain. Residues 204 to 230 (QSNKEILQQLHQQLVEAERRSVTYLKR) adopt a coiled-coil conformation. Phosphoserine is present on Ser-582. Disordered stretches follow at residues 642 to 755 (VQWS…TTRE) and 790 to 818 (SSCG…SHRK). A compositionally biased stretch (low complexity) spans 701–711 (STPESCVSSSS). Over residues 792–818 (CGPQQASRPGSTASSTRGLPSSQSHRK) the composition is skewed to polar residues.

Interacts with TOGARAM1, CCDC66, CEP104, CSPP1 and CEP290. Interacts with NDUFAF2. As to expression, strongly expressed in most melanomas and melanocytes. Weakly expressed in the testis.

It is found in the cytoplasm. The protein resides in the cytoskeleton. The protein localises to the cilium basal body. It localises to the cell projection. Its subcellular location is the cilium. It is found in the microtubule organizing center. The protein resides in the centrosome. The protein localises to the centriole. In terms of biological role, involved in ciliogenesis. It is required for appropriate acetylation and polyglutamylation of ciliary microtubules, and regulation of cilium length. Acts as a positive regulator of hedgehog (Hh)signaling. May participate in the trafficking and/or retention of GLI2 and GLI3 proteins at the ciliary tip. The polypeptide is LisH domain-containing protein ARMC9 (Homo sapiens (Human)).